Consider the following 237-residue polypeptide: Carboxy-S-adenosyl-L-methionine synthase (237 aa).

S-adenosyl-L-methionine contacts are provided by residues Tyr-36, Gly-61–Ser-63, Asp-86–Asn-87, Asp-112–Ile-113, Asn-127, and Arg-194.

Belongs to the class I-like SAM-binding methyltransferase superfamily. Cx-SAM synthase family. As to quaternary structure, homodimer.

The catalysed reaction is prephenate + S-adenosyl-L-methionine = carboxy-S-adenosyl-L-methionine + 3-phenylpyruvate + H2O. Functionally, catalyzes the conversion of S-adenosyl-L-methionine (SAM) to carboxy-S-adenosyl-L-methionine (Cx-SAM). The chain is Carboxy-S-adenosyl-L-methionine synthase from Ruthia magnifica subsp. Calyptogena magnifica.